We begin with the raw amino-acid sequence, 120 residues long: V-type proton ATPase subunit F (120 aa).

This sequence belongs to the V-ATPase F subunit family. V-ATPase is a heteromultimeric enzyme composed of a peripheral catalytic V1 complex (components A to H) attached to an integral membrane V0 proton pore complex (components: a, c, c', c'' and d).

Subunit of the peripheral V1 complex of vacuolar ATPase essential for assembly or catalytic function. V-ATPase is responsible for acidifying a variety of intracellular compartments in eukaryotic cells. In Dictyostelium discoideum (Social amoeba), this protein is V-type proton ATPase subunit F (vatF).